A 312-amino-acid chain; its full sequence is Ribosomal protein L11 methyltransferase (312 aa).

The S-adenosyl-L-methionine site is built by threonine 162, glycine 183, aspartate 205, and asparagine 248.

This sequence belongs to the methyltransferase superfamily. PrmA family.

The protein localises to the cytoplasm. It catalyses the reaction L-lysyl-[protein] + 3 S-adenosyl-L-methionine = N(6),N(6),N(6)-trimethyl-L-lysyl-[protein] + 3 S-adenosyl-L-homocysteine + 3 H(+). In terms of biological role, methylates ribosomal protein L11. The protein is Ribosomal protein L11 methyltransferase of Anoxybacillus flavithermus (strain DSM 21510 / WK1).